We begin with the raw amino-acid sequence, 502 residues long: Mannitol 2-dehydrogenase (502 aa).

37-48 (IVHIGVGGFHRA) serves as a coordination point for NAD(+).

The protein belongs to the mannitol dehydrogenase family. As to quaternary structure, monomer.

The catalysed reaction is D-mannitol + NAD(+) = D-fructose + NADH + H(+). Catalyzes the NAD(H)-dependent interconversion of D-fructose and D-mannitol in the mannitol metabolic pathway. The protein is Mannitol 2-dehydrogenase of Aspergillus fumigatus (strain CBS 144.89 / FGSC A1163 / CEA10) (Neosartorya fumigata).